Reading from the N-terminus, the 383-residue chain is uncharacterized protein (383 aa).

The protein belongs to the peptidase M20 family.

This is an uncharacterized protein from Staphylococcus aureus (strain USA300).